The primary structure comprises 492 residues: N-succinylglutamate 5-semialdehyde dehydrogenase (492 aa).

G220 to G225 serves as a coordination point for NAD(+). Active-site residues include E243 and C277.

The protein belongs to the aldehyde dehydrogenase family. AstD subfamily.

It catalyses the reaction N-succinyl-L-glutamate 5-semialdehyde + NAD(+) + H2O = N-succinyl-L-glutamate + NADH + 2 H(+). The protein operates within amino-acid degradation; L-arginine degradation via AST pathway; L-glutamate and succinate from L-arginine: step 4/5. Its function is as follows. Catalyzes the NAD-dependent reduction of succinylglutamate semialdehyde into succinylglutamate. This is N-succinylglutamate 5-semialdehyde dehydrogenase from Salmonella paratyphi B (strain ATCC BAA-1250 / SPB7).